A 609-amino-acid chain; its full sequence is Elongation factor 4 (609 aa).

The tr-type G domain maps to 11-193 (ERIRNFSIIA…QIVEKIPAPS (183 aa)). GTP is bound by residues 23–28 (DHGKST) and 140–143 (NKID).

The protein belongs to the TRAFAC class translation factor GTPase superfamily. Classic translation factor GTPase family. LepA subfamily.

The protein localises to the cell membrane. The catalysed reaction is GTP + H2O = GDP + phosphate + H(+). Its function is as follows. Required for accurate and efficient protein synthesis under certain stress conditions. May act as a fidelity factor of the translation reaction, by catalyzing a one-codon backward translocation of tRNAs on improperly translocated ribosomes. Back-translocation proceeds from a post-translocation (POST) complex to a pre-translocation (PRE) complex, thus giving elongation factor G a second chance to translocate the tRNAs correctly. Binds to ribosomes in a GTP-dependent manner. This is Elongation factor 4 from Geobacillus thermodenitrificans (strain NG80-2).